A 667-amino-acid polypeptide reads, in one-letter code: MHHQQRMAALGTDKELSDLLDFSAMFSPPVSSGKNGPTSLASGHFTGSNVEDRSSSGSWGNGGHPSPSRNYGDGTPYDHMTSRDLGSHDNLSPPFVNSRIQSKTERGSYSSYGRESNLQGCHQQSLLGGDMDMGNPGTLSPTKPGSQYYQYSSNNPRRRPLHSSAMEVQTKKVRKVPPGLPSSVYAPSASTADYNRDSPGYPSSKPATSTFPSSFFMQDGHHSSDPWSSSSGMNQPGYAGMLGNSSHIPQSSSYCSLHPHERLSYPSHSSADINSSLPPMSTFHRSGTNHYSTSSCTPPANGTDSIMANRGSGAAGSSQTGDALGKALASIYSPDHTNNSFSSNPSTPVGSPPSLSAGTAVWSRNGGQASSSPNYEGPLHSLQSRIEDRLERLDDAIHVLRNHAVGPSTAMPGGHGDMHGIIGPSHNGAMGGLGSGYGTGLLSANRHSLMVGTHREDGVALRGSHSLLPNQVPVPQLPVQSATSPDLNPPQDPYRGMPPGLQGQSVSSGSSEIKSDDEGDENLQDTKSSEDKKLDDDKKDIKSITSNNDDEDLTPEQKAEREKERRMANNARERLRVRDINEAFKELGRMVQLHLKSDKPQTKLLILHQAVAVILSLEQQVRERNLNPKAACLKRREEEKVSSEPPPLSLAGPHPGMGDASNHMGQM.

An essential for MYOD1 inhibition region spans residues 1-83; sequence MHHQQRMAAL…GTPYDHMTSR (83 aa). The 9aaTAD signature appears at 18–26; that stretch reads DLLDFSAMF. Disordered regions lie at residues 24-245, 263-321, 336-379, 466-570, and 634-667; these read AMFS…LGNS, LSYP…SQTG, HTNN…EGPL, SLLP…MANN, and KRRE…MGQM. A compositionally biased stretch (polar residues) spans 29-49; sequence PVSSGKNGPTSLASGHFTGSN. Phosphoserine occurs at positions 66, 87, and 92. Composition is skewed to polar residues over residues 107-126, 137-155, 205-216, and 266-306; these read GSYS…QQSL, GTLS…SSNN, KPATSTFPSSFF, and PSHS…TDSI. Positions 337 to 348 are enriched in low complexity; that stretch reads TNNSFSSNPSTP. Over residues 365–374 the composition is skewed to polar residues; that stretch reads NGGQASSSPN. At Ser372 the chain carries Phosphoserine. Residues 379-400 are leucine-zipper; it reads LHSLQSRIEDRLERLDDAIHVL. Low complexity-rich tracts occupy residues 467–480 and 503–512; these read LLPN…LPVQ and GQSVSSGSSE. Ser515 bears the Phosphoserine mark. 2 stretches are compositionally biased toward basic and acidic residues: residues 527–542 and 555–570; these read KSSE…KDIK and PEQK…MANN. Residues 564 to 617 enclose the bHLH domain; that stretch reads ERRMANNARERLRVRDINEAFKELGRMVQLHLKSDKPQTKLLILHQAVAVILSL. The segment at 619-642 is class A specific domain; sequence QQVRERNLNPKAACLKRREEEKVS.

Efficient DNA binding requires dimerization with another bHLH protein. Forms homo- or heterooligomers with myogenin. Interacts with HIVEP2. Interacts with NEUROD2. Interacts with AGBL1. Interacts with BHLHA9. In terms of tissue distribution, expressed in adult heart, brain, placenta, skeletal muscle and to a lesser extent in the lung. In developing embryonic tissues, expression mostly occurs in the brain.

It is found in the nucleus. In terms of biological role, transcription factor that binds to the immunoglobulin enhancer Mu-E5/KE5-motif. Involved in the initiation of neuronal differentiation. Activates transcription by binding to the E box (5'-CANNTG-3'). Binds to the E-box present in the somatostatin receptor 2 initiator element (SSTR2-INR) to activate transcription. Preferentially binds to either 5'-ACANNTGT-3' or 5'-CCANNTGG-3'. The polypeptide is Transcription factor 4 (TCF4) (Homo sapiens (Human)).